The following is a 254-amino-acid chain: Type III pantothenate kinase (254 aa).

ATP is bound at residue 7–14 (DVGNTRLK). Substrate is bound by residues tyrosine 96 and 103–106 (GSDR). Aspartate 105 (proton acceptor) is an active-site residue. Residue threonine 133 coordinates ATP. Threonine 183 contacts substrate.

Belongs to the type III pantothenate kinase family. As to quaternary structure, homodimer. The cofactor is NH4(+). It depends on K(+) as a cofactor.

The protein localises to the cytoplasm. It carries out the reaction (R)-pantothenate + ATP = (R)-4'-phosphopantothenate + ADP + H(+). It participates in cofactor biosynthesis; coenzyme A biosynthesis; CoA from (R)-pantothenate: step 1/5. In terms of biological role, catalyzes the phosphorylation of pantothenate (Pan), the first step in CoA biosynthesis. The polypeptide is Type III pantothenate kinase (Paracidovorax citrulli (strain AAC00-1) (Acidovorax citrulli)).